The chain runs to 506 residues: Lysine--tRNA ligase (506 aa).

Mg(2+) contacts are provided by Glu416 and Glu423.

It belongs to the class-II aminoacyl-tRNA synthetase family. As to quaternary structure, homodimer. Mg(2+) is required as a cofactor.

It is found in the cytoplasm. The enzyme catalyses tRNA(Lys) + L-lysine + ATP = L-lysyl-tRNA(Lys) + AMP + diphosphate. The sequence is that of Lysine--tRNA ligase from Bordetella parapertussis (strain 12822 / ATCC BAA-587 / NCTC 13253).